Consider the following 1080-residue polypeptide: MSNYYRRAHASSGSYRQPQEQPQYSRSGHYQYSNGHSHQQYSSQYNQRRRYNHNDGTRRRYNDDRPHSSNNASTRQYYATNNSQSGPYVNKKSDISSRRGMSQSRYSNSNVHNTLASSSGSLPTESALLLQQRPPSVLRYNTDNLKSKFHYFDPIKGEFFNKDKMLSWKATDKEFSETGYYVVKELQDGQFKFKIKHRHPEIKASDPRNENGIMTSGKVATHRKCRNSLILLPRISYDRYSLGPPPSCEIVVYPAQDSTTTNIQDISIKNYFKKYGEISHFEAFNDPNSALPLHVYLIKYASSDGKINDAAKAAFSAVRKHESSGCFIMGFKFEVILNKHSILNNIISKFVEINVKKLQKLQENLKKAKEKEAENEKAKELQGKDITLPKEPKVDTLSHSSGSEKRIPYDLLGVVNNRPVLHVSKIFVAKHRFCVEDFKYKLRGYRCAKFIDHPTGIYIIFNDIAHAQTCSNAESGNLTIMSRSRRIPILIKFHLILPRFQNRTRFNKSSSSSNSTNVPIKYESKEEFIEATAKQILKDLEKTLHVDIKKRLIGPTVFDALDHANFPELLAKRELKEKEKRQQIASKIAEDELKRKEEAKRDFDLFGLYGGYAKSNKRNLKRHNSLALDHTSLKRKKLSNGIKPMAHLLNEETDSKETTPLNDEGITRVSKEHDEEDENMTSSSSEEEEEEAPDKKFKSESEPTTPESDHLHGIKPLVPDQNGSSDVLDASSMYKPTATEIPEPVYPPEEYDLKYSQTLSSMDLQNAIKDEEDMLILKQLLSTYTPTVTPETSAALEYKIWQSRRKVLEEEKASDWQIELNGTLFDSELQPGSSFKAEGFRKIADKLKINYLPHRRRVHQPLNTVNIHNERNEYTPELCQREESSNKEPSDSVPQEVSSSRDNRASNRRFQQDIEAQKAAIGTESELLSLNQLNKRKKPVMFARSAIHNWGLYALDSIAAKEMIIEYVGERIRQPVAEMREKRYLKNGIGSSYLFRVDENTVIDATKKGGIARFINHCCDPNCTAKIIKVGGRRRIVIYALRDIAASEELTYDYKFEREKDDEERLPCLCGAPNCKGFLN.

3 disordered regions span residues M1–N46, N54–S73, and Y78–S121. The segment at M1–I230 is binds SWD2. Over residues S11–G28 the composition is skewed to polar residues. Positions H29 to N46 are enriched in low complexity. The segment covering N54–H67 has biased composition (basic and acidic residues). Composition is skewed to polar residues over residues Y78–P87 and R99–S121. A binds RNA region spans residues I230–L569. Residues K356–L569 form a binds SHG1 region. S625 bears the Phosphoserine mark. The interval A646–D729 is disordered. The span at D674–A692 shows a compositional bias: acidic residues. Over residues P693–H712 the composition is skewed to basic and acidic residues. Residues M762–K938 are binds SPP1. The tract at residues M762–K938 is contributes to RNA binding. Residues M762–K938 are required for catalytic activity. T875 carries the post-translational modification Phosphothreonine. Basic and acidic residues-rich tracts occupy residues E877–S890 and S899–R909. The tract at residues E877–R909 is disordered. The RxxxRR motif signature appears at R904–R909. Residues K938–K1055 form the SET domain. Y1054 serves as a coordination point for S-adenosyl-L-methionine. Residues E1064–N1080 enclose the Post-SET domain.

This sequence belongs to the class V-like SAM-binding methyltransferase superfamily. As to quaternary structure, component of the Set1C/COMPASS complex which consists of SET1(2), BRE2(2), SPP1(2), SDC1(1), SHG1(1), SWD1(1), SWD2(1), and SWD3(1). Interacts with MEC3.

The protein localises to the nucleus. The protein resides in the chromosome. It carries out the reaction L-lysyl(4)-[histone H3] + 3 S-adenosyl-L-methionine = N(6),N(6),N(6)-trimethyl-L-lysyl(4)-[histone H3] + 3 S-adenosyl-L-homocysteine + 3 H(+). The catalysed reaction is N(6)-methyl-L-lysyl(4)-[histone H3] + S-adenosyl-L-methionine = N(6),N(6)-dimethyl-L-lysyl(4)-[histone H3] + S-adenosyl-L-homocysteine + H(+). The enzyme catalyses N(6),N(6)-dimethyl-L-lysyl(4)-[histone H3] + S-adenosyl-L-methionine = N(6),N(6),N(6)-trimethyl-L-lysyl(4)-[histone H3] + S-adenosyl-L-homocysteine + H(+). Catalytic component of the COMPASS (Set1C) complex that specifically mono-, di- and trimethylates histone H3 to form H3K4me1/2/3. Binds RNAs involved in chromosome segregation, splicing and transcriptional regulation; appears to bind transcripts both co- and post-transcriptionally and binding might negatively affect its histone methyltransferase activity. COMPASS recognizes ubiquitinated H2B on one face of the nucleosome which stimulates the methylation of H3 on the opposing face. Plays a role in telomere length maintenance and transcription elongation regulation. The polypeptide is Histone-lysine N-methyltransferase, H3 lysine-4 specific (Saccharomyces cerevisiae (strain ATCC 204508 / S288c) (Baker's yeast)).